The chain runs to 505 residues: Ent-kaurene oxidase 2 (505 aa).

A helical transmembrane segment spans residues 3–23; sequence AFVPGGAGAAAAAVGGFVAAA. A heme-binding site is contributed by Cys449.

Belongs to the cytochrome P450 family. Heme is required as a cofactor. As to expression, widely expressed.

The protein localises to the membrane. The enzyme catalyses ent-kaur-16-ene + 3 reduced [NADPH--hemoprotein reductase] + 3 O2 = ent-kaur-16-en-19-oate + 3 oxidized [NADPH--hemoprotein reductase] + 4 H2O + 4 H(+). Its pathway is plant hormone biosynthesis; gibberellin biosynthesis. Functionally, catalyzes three successive oxidations of the 4-methyl group of ent-kaurene giving kaurenoic acid, a key step in gibberellins (GAs) biosynthesis. GAs, which are involved many processes, including stem elongation, play a central role in plant development. This Oryza sativa subsp. japonica (Rice) protein is Ent-kaurene oxidase 2.